The chain runs to 538 residues: Nicotinate phosphoribosyltransferase (538 aa).

Positions 21 and 210 each coordinate nicotinate. His213 bears the Phosphohistidine mark. Residue Arg318 coordinates nicotinate. Thr380 lines the 5-phospho-alpha-D-ribose 1-diphosphate pocket. Ser537 carries the post-translational modification Phosphoserine.

Belongs to the NAPRTase family. As to quaternary structure, homodimer. It depends on Mg(2+) as a cofactor. The cofactor is Mn(2+). Post-translationally, transiently phosphorylated on a His residue during the reaction cycle. Phosphorylation strongly increases the affinity for substrates and increases the rate of nicotinate D-ribonucleotide production. Dephosphorylation regenerates the low-affinity form of the enzyme, leading to product release.

The protein localises to the cytoplasm. Its subcellular location is the cytosol. It catalyses the reaction nicotinate + 5-phospho-alpha-D-ribose 1-diphosphate + ATP + H2O = nicotinate beta-D-ribonucleotide + ADP + phosphate + diphosphate. Its pathway is cofactor biosynthesis; NAD(+) biosynthesis; nicotinate D-ribonucleotide from nicotinate: step 1/1. Functionally, catalyzes the first step in the biosynthesis of NAD from nicotinic acid, the ATP-dependent synthesis of beta-nicotinate D-ribonucleotide from nicotinate and 5-phospho-D-ribose 1-phosphate. Helps prevent cellular oxidative stress via its role in NAD biosynthesis. The sequence is that of Nicotinate phosphoribosyltransferase (NAPRT) from Homo sapiens (Human).